We begin with the raw amino-acid sequence, 96 residues long: Large ribosomal subunit protein bL28 (96 aa).

This sequence belongs to the bacterial ribosomal protein bL28 family.

This is Large ribosomal subunit protein bL28 from Methylocella silvestris (strain DSM 15510 / CIP 108128 / LMG 27833 / NCIMB 13906 / BL2).